Reading from the N-terminus, the 151-residue chain is MDKKDYKKFYLIREDVLPESVVKTLKIKEVLKNDPSLSIFEAVKQFDLSRSAFYKYRDTIFPIDEKIESTREFTLILYVNDIVGMLAEVLNTLSNLDLSILTIHQSIPMEGRATITLSLDATSTDLEIDDVMEALRIVDHVSKVELISMTI.

One can recognise an ACT domain in the interval 74-149; the sequence is TLILYVNDIV…HVSKVELISM (76 aa).

It belongs to the UPF0735 family.

In Staphylococcus saprophyticus subsp. saprophyticus (strain ATCC 15305 / DSM 20229 / NCIMB 8711 / NCTC 7292 / S-41), this protein is UPF0735 ACT domain-containing protein SSP1116.